The chain runs to 483 residues: Jacalin-related lectin 13 (483 aa).

The segment at 1–20 (MTQKLESVGSERKSSEYMWD) is disordered. 3 consecutive Jacalin-type lectin domains span residues 2–147 (TQKL…YVTW), 150–295 (PARM…YFTT), and 307–461 (FREK…YFFP).

Belongs to the jacalin lectin family.

The protein is Jacalin-related lectin 13 (JAL13) of Arabidopsis thaliana (Mouse-ear cress).